Here is a 945-residue protein sequence, read N- to C-terminus: Isoleucine--tRNA ligase (945 aa).

A 'HIGH' region motif is present at residues Pro-66 to His-76. Residue Glu-581 participates in L-isoleucyl-5'-AMP binding. The 'KMSKS' region signature appears at Lys-622–Ser-626. Lys-625 is a binding site for ATP. Residues Cys-908, Cys-911, Cys-928, and Cys-931 each contribute to the Zn(2+) site.

Belongs to the class-I aminoacyl-tRNA synthetase family. IleS type 1 subfamily. As to quaternary structure, monomer. Requires Zn(2+) as cofactor.

It is found in the cytoplasm. It catalyses the reaction tRNA(Ile) + L-isoleucine + ATP = L-isoleucyl-tRNA(Ile) + AMP + diphosphate. In terms of biological role, catalyzes the attachment of isoleucine to tRNA(Ile). As IleRS can inadvertently accommodate and process structurally similar amino acids such as valine, to avoid such errors it has two additional distinct tRNA(Ile)-dependent editing activities. One activity is designated as 'pretransfer' editing and involves the hydrolysis of activated Val-AMP. The other activity is designated 'posttransfer' editing and involves deacylation of mischarged Val-tRNA(Ile). This chain is Isoleucine--tRNA ligase, found in Paraburkholderia phymatum (strain DSM 17167 / CIP 108236 / LMG 21445 / STM815) (Burkholderia phymatum).